Here is an 87-residue protein sequence, read N- to C-terminus: Large ribosomal subunit protein eL34 (87 aa).

Belongs to the eukaryotic ribosomal protein eL34 family.

The polypeptide is Large ribosomal subunit protein eL34 (Sulfurisphaera tokodaii (strain DSM 16993 / JCM 10545 / NBRC 100140 / 7) (Sulfolobus tokodaii)).